Consider the following 217-residue polypeptide: Frataxin, mitochondrial (217 aa).

The N-terminal 42 residues, 1–42, are a transit peptide targeting the mitochondrion; that stretch reads MWTLGRRSVASFLPRSALPGFAPTRAGAPRPAKDLSLSGLPG.

Belongs to the frataxin family. In terms of assembly, component of the mitochondrial core iron-sulfur cluster (ISC) complex composed of NFS1, LYRM4, NDUFAB1, ISCU, FXN, and FDX2; this complex is a heterohexamer containing two copies of each monomer. Homodimer. Monomer (probable predominant form). Oligomer. Monomers and polymeric aggregates of &gt;1 MDa have been isolated from mitochondria. A small fraction of heterologous overexpressed recombinant frataxin forms high-molecular weight aggregates that incorporate iron. Interacts with LYRM4. Interacts (via ferrous form) with ISCU; the interaction is possible when both are bound to the dimeric form of the cysteine desulfurase complex (NFS1:LYRM4) and the interaction enhances FXN interaction to the dimeric form of the cysteine desulfurase complex (NFS1:LYRM4). Interacts with FECH; one iron-bound FXN monomer seems to interact with a FECH homodimer. Interacts with SDHA and SDHB. Interacts with ACO2; the interaction is dependent on citrate. Interacts with HSPA9. Interacts with ACO1. Interacts with ISCU (cytoplasmic form). Processed in two steps by mitochondrial processing peptidase (MPP). MPP first cleaves the precursor to intermediate form and subsequently converts the intermediate to yield frataxin mature form (frataxin(81-210)) which is the predominant form. The additional forms, frataxin(56-210) and frataxin(78-210), seem to be produced when the normal maturation process is impaired; their physiological relevance is unsure.

The protein resides in the mitochondrion. It is found in the cytoplasm. The protein localises to the cytosol. It catalyses the reaction 4 Fe(2+) + O2 + 4 H(+) = 4 Fe(3+) + 2 H2O. Functionally, functions as an activator of persulfide transfer to the scaffoding protein ISCU as component of the core iron-sulfur cluster (ISC) assembly complex and participates to the [2Fe-2S] cluster assembly. Accelerates sulfur transfer from NFS1 persulfide intermediate to ISCU and to small thiols such as L-cysteine and glutathione leading to persulfuration of these thiols and ultimately sulfide release. Binds ferrous ion and is released from FXN upon the addition of both L-cysteine and reduced FDX2 during [2Fe-2S] cluster assembly. The core iron-sulfur cluster (ISC) assembly complex is involved in the de novo synthesis of a [2Fe-2S] cluster, the first step of the mitochondrial iron-sulfur protein biogenesis. This process is initiated by the cysteine desulfurase complex (NFS1:LYRM4:NDUFAB1) that produces persulfide which is delivered on the scaffold protein ISCU in a FXN-dependent manner. Then this complex is stabilized by FDX2 which provides reducing equivalents to accomplish the [2Fe-2S] cluster assembly. Finally, the [2Fe-2S] cluster is transferred from ISCU to chaperone proteins, including HSCB, HSPA9 and GLRX5. May play a role in the protection against iron-catalyzed oxidative stress through its ability to catalyze the oxidation of Fe(2+) to Fe(3+); the oligomeric form but not the monomeric form has in vitro ferroxidase activity. May be able to store large amounts of iron in the form of a ferrihydrite mineral by oligomerization; however, the physiological relevance is unsure as reports are conflicting and the function has only been shown using heterologous overexpression systems. May function as an iron chaperone protein that protects the aconitase [4Fe-4S]2+ cluster from disassembly and promotes enzyme reactivation. May play a role as a high affinity iron binding partner for FECH that is capable of both delivering iron to ferrochelatase and mediating the terminal step in mitochondrial heme biosynthesis. Its function is as follows. Modulates the RNA-binding activity of ACO1. May be involved in the cytoplasmic iron-sulfur protein biogenesis. May contribute to oxidative stress resistance and overall cell survival. The polypeptide is Frataxin, mitochondrial (Bos taurus (Bovine)).